Reading from the N-terminus, the 327-residue chain is Cytochrome P450 2C42 (327 aa).

Cys272 lines the heme pocket.

This sequence belongs to the cytochrome P450 family. Heme serves as cofactor.

Its subcellular location is the endoplasmic reticulum membrane. The protein resides in the microsome membrane. It catalyses the reaction an organic molecule + reduced [NADPH--hemoprotein reductase] + O2 = an alcohol + oxidized [NADPH--hemoprotein reductase] + H2O + H(+). Its function is as follows. Cytochromes P450 are a group of heme-thiolate monooxygenases. In liver microsomes, this enzyme is involved in an NADPH-dependent electron transport pathway. It oxidizes a variety of structurally unrelated compounds, including steroids, fatty acids, and xenobiotics. The protein is Cytochrome P450 2C42 (CYP2C42) of Sus scrofa (Pig).